Consider the following 434-residue polypeptide: Na(+)/H(+) antiporter NhaA 1 (434 aa).

Positions 1 to 15 are enriched in pro residues; that stretch reads MISPNPALPTPPHAP. The tract at residues 1 to 21 is disordered; the sequence is MISPNPALPTPPHAPTAPGRG. 12 consecutive transmembrane segments (helical) span residues 34 to 54, 74 to 94, 112 to 132, 143 to 163, 173 to 193, 196 to 216, 222 to 242, 245 to 265, 294 to 314, 326 to 346, 362 to 382, and 393 to 413; these read GGILLLIATVLALVIANSPAA, LSVSAWAADGLLAIFFFVVGL, ALPIAAAAGRVIVPAGIFTLI, GWAIPAATDIAFAVAVVAVVG, FLLTLAVVDDLLAITIIAVFY, GIAFVPLLLASVPLAVFGILV, AWYVLIPLGVAAWALVHASGI, TIAGVALGLLVPAIATARAGV, IAVPVFAFFSAGVTVGGLEGL, IIVALVIGKAAGITGASLLVA, VLGLSFVAGIGFTVSLLVGEL, and AVKVGVLIGLLTSAVIGGTLL.

The protein belongs to the NhaA Na(+)/H(+) (TC 2.A.33) antiporter family.

The protein resides in the cell membrane. The enzyme catalyses Na(+)(in) + 2 H(+)(out) = Na(+)(out) + 2 H(+)(in). Functionally, na(+)/H(+) antiporter that extrudes sodium in exchange for external protons. The chain is Na(+)/H(+) antiporter NhaA 1 from Clavibacter michiganensis subsp. michiganensis (strain NCPPB 382).